Consider the following 231-residue polypeptide: Probable intron-encoded endonuclease 1 (231 aa).

It belongs to the LAGLIDADG endonuclease family.

It localises to the mitochondrion. Endonuclease involved in mitochondrial 21S rRNA gene intron homing. This Wickerhamomyces canadensis (Yeast) protein is Probable intron-encoded endonuclease 1.